The primary structure comprises 234 residues: Adenosine 5'-phosphosulfate reductase (234 aa).

[4Fe-4S] cluster contacts are provided by cysteine 120, cysteine 121, cysteine 203, and cysteine 206. Cysteine 229 (nucleophile; cysteine thiosulfonate intermediate) is an active-site residue.

This sequence belongs to the PAPS reductase family. CysH subfamily. The cofactor is [4Fe-4S] cluster.

The protein localises to the cytoplasm. It carries out the reaction [thioredoxin]-disulfide + sulfite + AMP + 2 H(+) = adenosine 5'-phosphosulfate + [thioredoxin]-dithiol. It participates in sulfur metabolism; hydrogen sulfide biosynthesis; sulfite from sulfate. Functionally, catalyzes the formation of sulfite from adenosine 5'-phosphosulfate (APS) using thioredoxin as an electron donor. The chain is Adenosine 5'-phosphosulfate reductase from Bacillus cereus (strain ZK / E33L).